The chain runs to 478 residues: MHPNVYIPDAFLEKIQTILPANLNMEDFISACQRPLRKSIRVNTLKMSVEDFVKRAEDKGWTLSPVPWCDNGFWIEADESVVPLGNTAEHMSGLFYIQEASSMMPVSALFMNDESYDAVLDTAAAPGSKTTQIAALMKNEGVLVANEYAASRVKVLHANIERCGVRNAALSNFDGRVFGGWLPEQFDAVLLDAPCSGEGTVRKDEDAMKNWTQASVLEIADTQKDLIESAFHALKPGGVLVYSTCTLSTEENQQVCHHLKETFGDAVEFESLDGLFENANAALTEEGFLHIFPQVYDCEGFFVARIRKHHSVEAPQVKKRMGKFPFVKASKKESEEISKQLHNALDIELPSESTVWLRDKDVWLFPDALEPMIGELRFSRMGIKIAEAHKNGYRWQHQVATALATGAESNAIELTIEEAREWYMGRDVRPQIIPEGLKTGKGEVLVKYQGAIIGLGKWVSNRIKNGLPRELVRDKNLF.

S-adenosyl-L-methionine-binding positions include 123-129 (AAAPGSK), Glu-147, Asp-174, and Asp-192. Catalysis depends on Cys-245, which acts as the Nucleophile.

It belongs to the class I-like SAM-binding methyltransferase superfamily. RsmB/NOP family.

The protein resides in the cytoplasm. It catalyses the reaction cytidine(1407) in 16S rRNA + S-adenosyl-L-methionine = 5-methylcytidine(1407) in 16S rRNA + S-adenosyl-L-homocysteine + H(+). Its function is as follows. Specifically methylates the cytosine at position 1407 (m5C1407) of 16S rRNA. The sequence is that of Ribosomal RNA small subunit methyltransferase F from Vibrio parahaemolyticus serotype O3:K6 (strain RIMD 2210633).